The chain runs to 179 residues: Protein GrpE (179 aa).

The segment at 1-20 is disordered; sequence MSEETKEEIKNEKVDEEVTE.

It belongs to the GrpE family. As to quaternary structure, homodimer.

The protein localises to the cytoplasm. In terms of biological role, participates actively in the response to hyperosmotic and heat shock by preventing the aggregation of stress-denatured proteins, in association with DnaK and GrpE. It is the nucleotide exchange factor for DnaK and may function as a thermosensor. Unfolded proteins bind initially to DnaJ; upon interaction with the DnaJ-bound protein, DnaK hydrolyzes its bound ATP, resulting in the formation of a stable complex. GrpE releases ADP from DnaK; ATP binding to DnaK triggers the release of the substrate protein, thus completing the reaction cycle. Several rounds of ATP-dependent interactions between DnaJ, DnaK and GrpE are required for fully efficient folding. The chain is Protein GrpE from Lactococcus lactis subsp. lactis (strain IL1403) (Streptococcus lactis).